Reading from the N-terminus, the 1206-residue chain is Phosphoglucan, water dikinase, chloroplastic (1206 aa).

Disordered stretches follow at residues 1–20 (MTSL…PRRG) and 52–71 (RSAA…DSSK). The transit peptide at 1–56 (MTSLRPLETSLSIGGRPRRGLVLPPPGVGAGVLLRRGAMALPGRRGFACRGRSAAS) directs the protein to the chloroplast. A CBM20 domain is found at 67–168 (RDSSKQPLVH…KFDIVCHWNR (102 aa)). The active-site Tele-phosphohistidine intermediate is the His-776.

This sequence belongs to the PEP-utilizing enzyme family. Homodimer. Requires Mg(2+) as cofactor.

It is found in the plastid. The protein localises to the chloroplast. It carries out the reaction [(1-&gt;4)-6-phospho-alpha-D-glucosyl](n) + n ATP + n H2O = [(1-&gt;4)-3,6-bisphospho-alpha-D-glucosyl](n) + n AMP + n phosphate + 2n H(+). Functionally, mediates the incorporation of phosphate into starch-like phospho-alpha-glucan, mostly at the C-3 position of glucose units. May be required for starch degradation, suggesting that the phosphate content of starch regulates its degradability. In Oryza sativa subsp. japonica (Rice), this protein is Phosphoglucan, water dikinase, chloroplastic (GWD3).